A 515-amino-acid chain; its full sequence is Histidine ammonia-lyase (515 aa).

A cross-link (5-imidazolinone (Ala-Gly)) is located at residues 145–147 (ASG). 2,3-didehydroalanine (Ser) is present on serine 146.

Belongs to the PAL/histidase family. Post-translationally, contains an active site 4-methylidene-imidazol-5-one (MIO), which is formed autocatalytically by cyclization and dehydration of residues Ala-Ser-Gly.

The protein resides in the cytoplasm. It carries out the reaction L-histidine = trans-urocanate + NH4(+). It participates in amino-acid degradation; L-histidine degradation into L-glutamate; N-formimidoyl-L-glutamate from L-histidine: step 1/3. The polypeptide is Histidine ammonia-lyase (Gluconacetobacter diazotrophicus (strain ATCC 49037 / DSM 5601 / CCUG 37298 / CIP 103539 / LMG 7603 / PAl5)).